The sequence spans 155 residues: Large ribosomal subunit protein uL22c (155 aa).

It belongs to the universal ribosomal protein uL22 family. Part of the 50S ribosomal subunit.

It is found in the plastid. Its subcellular location is the chloroplast. In terms of biological role, this protein binds specifically to 23S rRNA. Its function is as follows. The globular domain of the protein is located near the polypeptide exit tunnel on the outside of the subunit, while an extended beta-hairpin is found that lines the wall of the exit tunnel in the center of the 70S ribosome. In Coffea arabica (Arabian coffee), this protein is Large ribosomal subunit protein uL22c (rpl22).